Reading from the N-terminus, the 428-residue chain is MKTSLFKSLYFQVLTAIAIGILLGHFYPEIGEQMKPLGDGFVKLIKMIIAPVIFCTVVTGIAGMESMKAVGRTGAVALLYFEIVSTIALIIGLIIVNVVQPGAGMNVDPATLDAKAVAVYADQAKDQGIVAFIMDVIPASVIGAFASGNILQVLLFAVLFGFALHRLGSKGQLIFNVIESFSQVIFGIINMIMRLAPIGAFGAMAFTIGKYGVGTLVQLGQLIICFYITCILFVVLVLGSIAKATGFSIFKFIRYIREELLIVLGTSSSESALPRMLDKMEKLGCRKSVVGLVIPTGYSFNLDGTSIYLTMAAVFIAQATNSQMDIVHQITLLIVLLLSSKGAAGVTGSGFIVLAATLSAVGHLPVAGLALILGIDRFMSEARALTNLVGNGVATIVVAKWVKELDHKKLDDVLNNRAPDGKTHELSS.

The next 8 membrane-spanning stretches (helical) occupy residues 8–28 (SLYFQVLTAIAIGILLGHFYP), 44–64 (LIKMIIAPVIFCTVVTGIAGM), 76–96 (VALLYFEIVSTIALIIGLIIV), 142–162 (IGAFASGNILQVLLFAVLFGF), 184–204 (VIFGIINMIMRLAPIGAFGAM), 222–242 (LIICFYITCILFVVLVLGSIA), 326–346 (IVHQITLLIVLLLSSKGAAGV), and 352–372 (IVLAATLSAVGHLPVAGLALI).

The protein belongs to the dicarboxylate/amino acid:cation symporter (DAACS) (TC 2.A.23) family.

The protein localises to the cell inner membrane. Its function is as follows. Responsible for the transport of dicarboxylates such as succinate, fumarate, and malate from the periplasm across the membrane. The polypeptide is C4-dicarboxylate transport protein (Escherichia coli O139:H28 (strain E24377A / ETEC)).